The sequence spans 690 residues: Hypersensitivity response secretion protein HrcV (690 aa).

Transmembrane regions (helical) follow at residues 14-36 (IGIAALVVAVVALMVLPLPTMLI), 48-72 (VVLLMVTMYIPSATSLSAFPSLLLF), 104-128 (LVVGGNLVVGLVVFLIITTVQFIVI), 196-216 (AIAGLVITLVNILAGIVIGIT), 229-253 (FAVLSIGDAMVSQIPSLLISVAAGV), and 291-315 (LLMGFALVPGFPSFLFVALATLIFV).

This sequence belongs to the FHIPEP (flagella/HR/invasion proteins export pore) family.

It localises to the cell inner membrane. Functionally, involved in the secretion of PopA, a proteinaceous elicitor of the hypersensitivity response in plants. This is Hypersensitivity response secretion protein HrcV (hrcV) from Ralstonia nicotianae (strain ATCC BAA-1114 / GMI1000) (Ralstonia solanacearum).